The following is a 134-amino-acid chain: Large ribosomal subunit protein uL22 (134 aa).

This sequence belongs to the universal ribosomal protein uL22 family. As to quaternary structure, part of the 50S ribosomal subunit.

Functionally, this protein binds specifically to 23S rRNA; its binding is stimulated by other ribosomal proteins, e.g. L4, L17, and L20. It is important during the early stages of 50S assembly. It makes multiple contacts with different domains of the 23S rRNA in the assembled 50S subunit and ribosome. The globular domain of the protein is located near the polypeptide exit tunnel on the outside of the subunit, while an extended beta-hairpin is found that lines the wall of the exit tunnel in the center of the 70S ribosome. The polypeptide is Large ribosomal subunit protein uL22 (Rhodococcus erythropolis (strain PR4 / NBRC 100887)).